Here is a 186-residue protein sequence, read N- to C-terminus: Ribosome-recycling factor (186 aa).

This sequence belongs to the RRF family.

The protein localises to the cytoplasm. Its function is as follows. Responsible for the release of ribosomes from messenger RNA at the termination of protein biosynthesis. May increase the efficiency of translation by recycling ribosomes from one round of translation to another. The sequence is that of Ribosome-recycling factor from Chlorobium chlorochromatii (strain CaD3).